Here is a 491-residue protein sequence, read N- to C-terminus: Allene oxide synthase 3 (491 aa).

Heme b contacts are provided by Lys-104, His-135, and Lys-139. 2 residues coordinate (13S)-hydroperoxy-(9Z,11E)-octadecadienoate: Asn-296 and Lys-302. Asn-296 is a (13S)-hydroperoxy-(9Z,11E,15Z)-octadecatrienoate binding site. 2 residues coordinate heme b: Lys-442 and Cys-444.

Belongs to the cytochrome P450 family. Requires heme b as cofactor. Expressed in roots. Not detected in aerial tissues, including cotyledons, leaves, stems and flower buds.

The enzyme catalyses (13S)-hydroperoxy-(9Z,11E,15Z)-octadecatrienoate = (9Z,13S,15Z)-12,13-epoxyoctadeca-9,11,15-trienoate + H2O. It catalyses the reaction (13S)-hydroperoxy-(9Z,11E)-octadecadienoate = (9Z,13S)-12,13-epoxyoctadeca-9,11-dienoate + H2O. It carries out the reaction (9Z,13S,15Z)-12,13-epoxyoctadeca-9,11,15-trienoate = (9S,13S,15Z)-12-oxophyto-10,15-dienoate. Its function is as follows. Cytochrome P450 metabolizing both 13- and 9-hydroperoxides of linoleic and linolenic acids, but with a marked preference for 9-hydroperoxy fatty acids. Catalyzes not only the synthesis of allene oxide, but also its hydrolysis and cyclization. The first step is the synthesis of (12Z)-9,10-epoxyoctadeca-10,12-dienoic acid (9,10-EOD) and the final products are (9R)-alpha-ketol and the racemic cis-10-oxo-11-phytoenoic acid. The cyclase activity possesses regiospecificity and (9Z)-12,13-epoxyoctadeca-9,11-dienoic acid (12,13-EOD) is significantly less efficient as a substrate for cyclopentenone production than 9,10-EOD. Has no hydroperoxide lyase activity. May play a defensive role against soil-borne pests that affect roots or juvenile tissues as they emerge from the germinating seed. This chain is Allene oxide synthase 3, found in Solanum lycopersicum (Tomato).